The following is a 186-amino-acid chain: Ribosome-recycling factor (186 aa).

Belongs to the RRF family.

It is found in the cytoplasm. Its function is as follows. Responsible for the release of ribosomes from messenger RNA at the termination of protein biosynthesis. May increase the efficiency of translation by recycling ribosomes from one round of translation to another. This Chlorobium phaeobacteroides (strain BS1) protein is Ribosome-recycling factor.